A 570-amino-acid polypeptide reads, in one-letter code: 2-isopropylmalate synthase (570 aa).

The Pyruvate carboxyltransferase domain occupies 31–305 (PIWMSTDLRD…DPELDFSHIN (275 aa)). Mg(2+)-binding residues include Asp40, His244, His246, and Asn280. The regulatory domain stretch occupies residues 437–570 (SDGAIGYVSH…RRSSAQATVA (134 aa)).

The protein belongs to the alpha-IPM synthase/homocitrate synthase family. LeuA type 2 subfamily. As to quaternary structure, homodimer. Mg(2+) is required as a cofactor.

It localises to the cytoplasm. It carries out the reaction 3-methyl-2-oxobutanoate + acetyl-CoA + H2O = (2S)-2-isopropylmalate + CoA + H(+). It functions in the pathway amino-acid biosynthesis; L-leucine biosynthesis; L-leucine from 3-methyl-2-oxobutanoate: step 1/4. In terms of biological role, catalyzes the condensation of the acetyl group of acetyl-CoA with 3-methyl-2-oxobutanoate (2-ketoisovalerate) to form 3-carboxy-3-hydroxy-4-methylpentanoate (2-isopropylmalate). This Ralstonia pickettii (strain 12J) protein is 2-isopropylmalate synthase.